Here is a 160-residue protein sequence, read N- to C-terminus: Ribosomal RNA large subunit methyltransferase H (160 aa).

S-adenosyl-L-methionine is bound by residues L76, G108, and 127 to 132 (LGKLTW).

Belongs to the RNA methyltransferase RlmH family. In terms of assembly, homodimer.

The protein resides in the cytoplasm. It catalyses the reaction pseudouridine(1915) in 23S rRNA + S-adenosyl-L-methionine = N(3)-methylpseudouridine(1915) in 23S rRNA + S-adenosyl-L-homocysteine + H(+). Functionally, specifically methylates the pseudouridine at position 1915 (m3Psi1915) in 23S rRNA. The sequence is that of Ribosomal RNA large subunit methyltransferase H from Agrobacterium fabrum (strain C58 / ATCC 33970) (Agrobacterium tumefaciens (strain C58)).